A 155-amino-acid chain; its full sequence is Large ribosomal subunit protein uL11 (155 aa).

This sequence belongs to the universal ribosomal protein uL11 family. Part of the ribosomal stalk of the 50S ribosomal subunit. Interacts with L10 and the large rRNA to form the base of the stalk. L10 forms an elongated spine to which L12 dimers bind in a sequential fashion forming a multimeric L10(L12)X complex.

Its function is as follows. Forms part of the ribosomal stalk which helps the ribosome interact with GTP-bound translation factors. This Picrophilus torridus (strain ATCC 700027 / DSM 9790 / JCM 10055 / NBRC 100828 / KAW 2/3) protein is Large ribosomal subunit protein uL11.